A 233-amino-acid chain; its full sequence is Type IV secretion system protein PtlE homolog (233 aa).

The chain crosses the membrane as a helical span at residues 42-62 (VAWAALAVTALSLIAIATMLP).

It belongs to the virB8 family.

The protein resides in the cell inner membrane. This chain is Type IV secretion system protein PtlE homolog (ptlE), found in Bordetella parapertussis (strain 12822 / ATCC BAA-587 / NCTC 13253).